Here is a 285-residue protein sequence, read N- to C-terminus: Probable endonuclease 4 (285 aa).

Zn(2+) contacts are provided by His-69, His-109, Glu-145, Asp-179, His-182, His-216, Asp-229, His-231, and Glu-261.

The protein belongs to the AP endonuclease 2 family. It depends on Zn(2+) as a cofactor.

It catalyses the reaction Endonucleolytic cleavage to 5'-phosphooligonucleotide end-products.. In terms of biological role, endonuclease IV plays a role in DNA repair. It cleaves phosphodiester bonds at apurinic or apyrimidinic (AP) sites, generating a 3'-hydroxyl group and a 5'-terminal sugar phosphate. The protein is Probable endonuclease 4 of Yersinia pseudotuberculosis serotype O:1b (strain IP 31758).